The primary structure comprises 297 residues: Mitochondrial glycine transporter (297 aa).

Solcar repeat units lie at residues 5–81, 105–189, and 211–295; these read TGHL…MRTA, LSMY…LKHT, and TSTA…LIKH. 6 helical membrane passes run 8 to 33, 56 to 82, 111 to 136, 164 to 187, 215 to 241, and 270 to 288; these read LIGG…TRFQ, GTLP…RTAL, LVTG…VRYE, GFGP…EKLK, INST…KTRM, and GLSM…AWGI.

This sequence belongs to the mitochondrial carrier (TC 2.A.29) family. SLC25A38 subfamily.

Its subcellular location is the mitochondrion inner membrane. The catalysed reaction is glycine(in) = glycine(out). Its function is as follows. Mitochondrial glycine transporter that imports glycine into the mitochondrial matrix. Plays an important role in providing glycine for the first enzymatic step in heme biosynthesis, the condensation of glycine with succinyl-CoA to produce 5-aminolevulinate (ALA) in the mitochondrial matrix. The sequence is that of Mitochondrial glycine transporter from Candida glabrata (strain ATCC 2001 / BCRC 20586 / JCM 3761 / NBRC 0622 / NRRL Y-65 / CBS 138) (Yeast).